A 247-amino-acid chain; its full sequence is Probable transcriptional regulatory protein GAU_0635 (247 aa).

Belongs to the TACO1 family.

The protein localises to the cytoplasm. This is Probable transcriptional regulatory protein GAU_0635 from Gemmatimonas aurantiaca (strain DSM 14586 / JCM 11422 / NBRC 100505 / T-27).